Here is a 93-residue protein sequence, read N- to C-terminus: MKTLVLLSALVLLAFQVQADPIQNTDEETKTEEQPGEDDQAVSVSFGDPEGSSLQEESLRDLVCYCRKRGCKGRERMNGTCRKGHLLYTMCCR.

The first 19 residues, 1-19 (MKTLVLLSALVLLAFQVQA), serve as a signal peptide directing secretion. Residues 20–58 (DPIQNTDEETKTEEQPGEDDQAVSVSFGDPEGSSLQEES) constitute a propeptide that is removed on maturation. Residues 22 to 56 (IQNTDEETKTEEQPGEDDQAVSVSFGDPEGSSLQE) are disordered. Cystine bridges form between C64–C92, C66–C81, and C71–C91.

This sequence belongs to the alpha-defensin family. Paneth cells of the small bowel.

It is found in the secreted. Its function is as follows. Probably contributes to the antimicrobial barrier function of the small bowel mucosa. In Mus musculus (Mouse), this protein is Alpha-defensin 10 (Defa10).